We begin with the raw amino-acid sequence, 140 residues long: Large ribosomal subunit protein uL16 (140 aa).

The span at 1-17 (MPLMPKRVKHRKMHRGS) shows a compositional bias: basic residues. The tract at residues 1-21 (MPLMPKRVKHRKMHRGSRSGN) is disordered.

This sequence belongs to the universal ribosomal protein uL16 family. As to quaternary structure, part of the 50S ribosomal subunit.

Binds 23S rRNA and is also seen to make contacts with the A and possibly P site tRNAs. This chain is Large ribosomal subunit protein uL16, found in Akkermansia muciniphila (strain ATCC BAA-835 / DSM 22959 / JCM 33894 / BCRC 81048 / CCUG 64013 / CIP 107961 / Muc).